The primary structure comprises 669 residues: DNA ligase (669 aa).

NAD(+) contacts are provided by residues 35–39 (DSEYD), 84–85 (SL), and Glu114. Lys116 (N6-AMP-lysine intermediate) is an active-site residue. 4 residues coordinate NAD(+): Arg137, Glu171, Lys287, and Lys311. Cys405, Cys408, Cys423, and Cys428 together coordinate Zn(2+). The 79-residue stretch at 591–669 (DSDSYFAGKT…EAQLLGELKK (79 aa)) folds into the BRCT domain.

It belongs to the NAD-dependent DNA ligase family. LigA subfamily. Mg(2+) is required as a cofactor. Mn(2+) serves as cofactor.

The enzyme catalyses NAD(+) + (deoxyribonucleotide)n-3'-hydroxyl + 5'-phospho-(deoxyribonucleotide)m = (deoxyribonucleotide)n+m + AMP + beta-nicotinamide D-nucleotide.. In terms of biological role, DNA ligase that catalyzes the formation of phosphodiester linkages between 5'-phosphoryl and 3'-hydroxyl groups in double-stranded DNA using NAD as a coenzyme and as the energy source for the reaction. It is essential for DNA replication and repair of damaged DNA. In Bacillus velezensis (strain DSM 23117 / BGSC 10A6 / LMG 26770 / FZB42) (Bacillus amyloliquefaciens subsp. plantarum), this protein is DNA ligase.